A 72-amino-acid polypeptide reads, in one-letter code: Protein kish-A (72 aa).

The first 26 residues, 1–26 (MSAIFNFQSLLTVILLLICTCAYIRS), serve as a signal peptide directing secretion. Residues 27–53 (LAPSLLDRNKTGLLGIFWKCARIGERK) lie on the Extracellular side of the membrane. A glycan (N-linked (GlcNAc...) asparagine) is linked at asparagine 35. A helical transmembrane segment spans residues 54 to 71 (SPYVAVCCIVMAFSILFI). Residue glutamine 72 is a topological domain, cytoplasmic.

It belongs to the KISH family.

It is found in the golgi apparatus membrane. Involved in the early part of the secretory pathway. This is Protein kish-A (TMEM167A) from Bos taurus (Bovine).